A 230-amino-acid chain; its full sequence is 5'-methylthioadenosine/S-adenosylhomocysteine nucleosidase (230 aa).

The active-site Proton acceptor is the E12. Substrate contacts are provided by residues G78, M153, and 174–175; that span reads ME. Catalysis depends on D198, which acts as the Proton donor.

It belongs to the PNP/UDP phosphorylase family. MtnN subfamily.

The catalysed reaction is S-adenosyl-L-homocysteine + H2O = S-(5-deoxy-D-ribos-5-yl)-L-homocysteine + adenine. It carries out the reaction S-methyl-5'-thioadenosine + H2O = 5-(methylsulfanyl)-D-ribose + adenine. The enzyme catalyses 5'-deoxyadenosine + H2O = 5-deoxy-D-ribose + adenine. The protein operates within amino-acid biosynthesis; L-methionine biosynthesis via salvage pathway; S-methyl-5-thio-alpha-D-ribose 1-phosphate from S-methyl-5'-thioadenosine (hydrolase route): step 1/2. Its function is as follows. Catalyzes the irreversible cleavage of the glycosidic bond in both 5'-methylthioadenosine (MTA) and S-adenosylhomocysteine (SAH/AdoHcy) to adenine and the corresponding thioribose, 5'-methylthioribose and S-ribosylhomocysteine, respectively. Also cleaves 5'-deoxyadenosine, a toxic by-product of radical S-adenosylmethionine (SAM) enzymes, into 5-deoxyribose and adenine. This Aeromonas salmonicida (strain A449) protein is 5'-methylthioadenosine/S-adenosylhomocysteine nucleosidase.